Reading from the N-terminus, the 260-residue chain is 3beta-hydroxysteroid dehydrogenase 2 (260 aa).

Residues Asp43, 69–70 (DV), Asn96, Tyr163, and Lys167 each bind NAD(+). Residue Tyr163 is the Proton acceptor of the active site.

The protein belongs to the short-chain dehydrogenases/reductases (SDR) family.

The catalysed reaction is 3-oxo-5beta-cholan-24-oate + NADH + H(+) = isolithocholate + NAD(+). The enzyme catalyses 12alpha-hydroxy-3-oxo-5beta-cholan-24-oate + NADH + H(+) = isodeoxycholate + NAD(+). It carries out the reaction 12alpha-hydroxy-3-oxo-5beta-cholan-24-oate + NADPH + H(+) = isodeoxycholate + NADP(+). It catalyses the reaction 7alpha,12alpha-dihydroxy-3-oxo-5beta-cholan-24-oate + NADH + H(+) = isocholate + NAD(+). The catalysed reaction is 3-oxochenodeoxycholate + NADH + H(+) = isochenodeoxycholate + NAD(+). In terms of biological role, involved in the modification of secondary bile acids into iso-bile acids (3beta-bile acids) via epimerization of the 3-OH group through a 3-oxo-intermediate. Catalyzes the reduction of 12-alpha-hydroxy-3-oxo-5-beta-cholan-24-oate (3-oxo-DCA) and 3-oxo-5-beta-cholan-24-oate (3-oxo-LCA) to yield isodeoxycholate (isoDCA) and isolithocholate (isoLCA), respectively. Is also able to catalyze the reduction of 3-dehydrocholate (3-oxo-CA or 7alpha,12alpha-dihydroxy-3-oxo-5beta-cholan-24-oate) and 7-alpha-hydroxy-3-oxo-5-beta-cholan-24-oate (3-oxo-CDCA), into isocholate (isoCA) and isochenodeoxycholate (isoCDCA), respectively. Accepts both NADH and NADPH as cosubstrates. The conversion of the abundant bile acid deoxycholate (DCA) into isoDCA by the gut bacterium E.lenta favors the growth of the keystone commensal genus Bacteroides, since isoDCA is less cytotoxic than its parent compound, DCA; iso-bile acids have thus a potential role in modulating gut community composition. The sequence is that of 3beta-hydroxysteroid dehydrogenase 2 from Eggerthella lenta (strain ATCC 25559 / DSM 2243 / CCUG 17323 / JCM 9979 / KCTC 3265 / NCTC 11813 / VPI 0255 / 1899 B) (Eubacterium lentum).